The chain runs to 1031 residues: MMGKKSRAVPGRRPILQLSPPGPRSSTPGRDPDPDPDPEADSTAAATSQSAPAAATAAAATSPAVPASAAPEDSPSEDEQEVVVEVPNVVQNPPTPVMTTRPTAVKATGGLCLLGAYADSDDDESDVSEKTAQSKEANGNQATDIDSTLANFLAEIDAITAPQPAAPVVASAPPPTPPRPEPKEAATPALSPTASNGSDTAQTPGWHYDTQCSLAGVEIEMGDWQEVWDENTGCYYYWNTQTNEVTWELPQYLATQVQGLQHYQPSSVTGTEAAFVVNTDMYTKERTTAASSSKSGPVITKREVKKEVNEGIQALSNSEEERKGVAAALLAPLLPEGVKEEEERWRRKVICKEADPVSETKETSTASEETGPSIKPPEVMMDGTEDPSQEELCSVVQSGESEEEEEEEEQDTLELELALERKKAELRALEEGDGSVSGSSPRSDISQPASQDGVRRIMSKRGKWKMFVRATSPESTSRSSSKTGRDSPENGETAIGAEDSEKIDEISDKETEVEESSEKIKVQLAPKVEEEQDLKFQIGELANTLTSKFEFLGINRQSISNFHMLLLQTETRIADWREGALNGNYLKRKLQDAAEQLKQYEINATPKGWSCHWDRDHRRYFYVNEQSGESQWEFPDGEEEEESQTKEVRDESLPKLTVKDKTCTDPNSTESSENPTGSLCKESFSGQVSSSLMPLTPFWTLLQSNVPVLQPPLPLEMPPPPPPPPESPPPPPPPPPPPPPLEDGEIQEVEMEDEGSEEPPAPGTEEDTPLKPSTQTTAVTSQSLVDSTASSPPSNKAVKRKAPEMSTSVVQRSATIGSSPVLYSQSAIAAGHQAVGMAHQAVGMAHQAVSASHAAAAGVGHQARGMSLQSNYLGLAAAPALMSYAECSVPIGVTTPSLQPAQARGTMAAPAVVEPPPPPPPPPTPTPPPPPPAPKVPPPEKTRKGKKDKAKKSKTKMPSLVKKWQSIQRELDEEDNSSSSEEDRESTAQKRIEEWKQQQLVSGLAERNANFEALPEDWRARLKRRKMAPST.

Disordered stretches follow at residues 1–102 (MMGK…TTRP), 116–143 (AYAD…NQAT), and 166–205 (APVV…QTPG). S19 bears the Phosphoserine mark. Low complexity-rich tracts occupy residues 41-73 (DSTA…APED) and 83-92 (VVEVPNVVQN). Phosphoserine is present on residues S120, S125, and S128. Positions 134-143 (SKEANGNQAT) are enriched in polar residues. Residue T176 is modified to Phosphothreonine. The segment covering 190-203 (LSPTASNGSDTAQT) has biased composition (polar residues). The region spanning 218 to 252 (EIEMGDWQEVWDENTGCYYYWNTQTNEVTWELPQY) is the WW 1 domain. At K294 the chain carries N6-acetyllysine. K305 is covalently cross-linked (Glycyl lysine isopeptide (Lys-Gly) (interchain with G-Cter in SUMO1)). Residue K339 forms a Glycyl lysine isopeptide (Lys-Gly) (interchain with G-Cter in SUMO2) linkage. K352 participates in a covalent cross-link: Glycyl lysine isopeptide (Lys-Gly) (interchain with G-Cter in SUMO1); alternate. K352 participates in a covalent cross-link: Glycyl lysine isopeptide (Lys-Gly) (interchain with G-Cter in SUMO2); alternate. A disordered region spans residues 355–518 (DPVSETKETS…KETEVEESSE (164 aa)). A compositionally biased stretch (acidic residues) spans 400 to 414 (ESEEEEEEEEQDTLE). Residues 418 to 430 (ALERKKAELRALE) show a composition bias toward basic and acidic residues. Residues S435, S440, S443, S446, and S450 each carry the phosphoserine modification. Residues 436 to 450 (VSGSSPRSDISQPAS) show a composition bias toward polar residues. Basic residues predominate over residues 457-466 (IMSKRGKWKM). A compositionally biased stretch (low complexity) spans 469-482 (RATSPESTSRSSSK). Residues S472, S507, and S516 each carry the phosphoserine modification. Residues 499 to 518 (DSEKIDEISDKETEVEESSE) are compositionally biased toward basic and acidic residues. K527 is covalently cross-linked (Glycyl lysine isopeptide (Lys-Gly) (interchain with G-Cter in SUMO1); alternate). Residue K527 forms a Glycyl lysine isopeptide (Lys-Gly) (interchain with G-Cter in SUMO2); alternate linkage. The WW 2 domain occupies 603-637 (NATPKGWSCHWDRDHRRYFYVNEQSGESQWEFPDG). Disordered regions lie at residues 629–681 (ESQW…SLCK), 712–813 (PLPL…VQRS), and 900–994 (PAQA…RIEE). Over residues 643–663 (SQTKEVRDESLPKLTVKDKTC) the composition is skewed to basic and acidic residues. Over residues 664 to 677 (TDPNSTESSENPTG) the composition is skewed to polar residues. Pro residues predominate over residues 712–741 (PLPLEMPPPPPPPPESPPPPPPPPPPPPPL). Positions 742 to 757 (EDGEIQEVEMEDEGSE) are enriched in acidic residues. Polar residues predominate over residues 771 to 794 (KPSTQTTAVTSQSLVDSTASSPPS). Pro residues predominate over residues 913-939 (VEPPPPPPPPPTPTPPPPPPAPKVPPP). Basic residues predominate over residues 943 to 955 (RKGKKDKAKKSKT). The span at 971–984 (LDEEDNSSSSEEDR) shows a compositional bias: acidic residues. Phosphoserine is present on residues S977, S978, and S979. Residues 985–994 (ESTAQKRIEE) are compositionally biased toward basic and acidic residues.

As to quaternary structure, binds FMN1. Interacts with the Arg/Gly-rich-flanked Pro-rich regions of KHDRBS1/SAM68. Arginine methylation in these regions has no effect on this binding. Ubiquitous. Highest levels in spleen and thymus.

This chain is Formin-binding protein 4 (Fnbp4), found in Mus musculus (Mouse).